We begin with the raw amino-acid sequence, 81 residues long: Sec-independent protein translocase protein TatA (81 aa).

Residues 1-21 (MGGLQPWHWVIVIAVFVLLFG) traverse the membrane as a helical segment. A compositionally biased stretch (basic and acidic residues) spans 46–56 (MQAESKGDEPK). Residues 46 to 81 (MQAESKGDEPKPATPIASERVDTTAPEQQSTDRHTA) form a disordered region.

The protein belongs to the TatA/E family. The Tat system comprises two distinct complexes: a TatABC complex, containing multiple copies of TatA, TatB and TatC subunits, and a separate TatA complex, containing only TatA subunits. Substrates initially bind to the TatABC complex, which probably triggers association of the separate TatA complex to form the active translocon.

The protein resides in the cell membrane. Part of the twin-arginine translocation (Tat) system that transports large folded proteins containing a characteristic twin-arginine motif in their signal peptide across membranes. TatA could form the protein-conducting channel of the Tat system. The protein is Sec-independent protein translocase protein TatA of Mycolicibacterium smegmatis (strain ATCC 700084 / mc(2)155) (Mycobacterium smegmatis).